A 389-amino-acid chain; its full sequence is Flavin-dependent monooxygenase (389 aa).

FAD contacts are provided by residues 12–15 (AGVA), 34–35 (EK), Q44, R105, Y267, and D289.

The protein belongs to the aromatic-ring hydroxylase family. It depends on FAD as a cofactor.

It carries out the reaction a tetracycline + NADPH + O2 + H(+) = a (1S,10aS)-3-(CONH2)-1-(Me2N)-3,3a,4,6-(HO)4-2,5-dioxo-1H,10aH,11H,11aH-cyclopenta[b]anthracene + CO + NADP(+) + H2O. It catalyses the reaction 7-chlorotetracycline + NADPH + O2 + H(+) = (1S,10S,10aS)-3-(CONH2)-9-Cl-1-(Me2N)-3,3a,4,10-(HO)4-10-Me-2,5-dioxo-1H,10aH,11H,11aH-cyclopenta[b]anthracen-6-olate + CO + NADP(+) + H2O. Inhibited by anhydrotetracycline. An FAD-requiring monooxygenase active on tetracycline antibiotic and some of its derivatives, which leads to their inactivation. Expression in E.coli confers high resistance to tetracycline and oxytetracycline, does not confer resistance to minocycline or tigecycline. The reaction requires NADPH. Expression in L.pneumophila confers resistance to tetracycline. Degrades and confers resistance to tetracycline and chlortetracycline. This chain is Flavin-dependent monooxygenase (tet(56)), found in Legionella longbeachae serogroup 1 (strain NSW150).